Consider the following 236-residue polypeptide: Segregation and condensation protein A (236 aa).

It belongs to the ScpA family. Component of a cohesin-like complex composed of ScpA, ScpB and the Smc homodimer, in which ScpA and ScpB bind to the head domain of Smc. The presence of the three proteins is required for the association of the complex with DNA.

Its subcellular location is the cytoplasm. Participates in chromosomal partition during cell division. May act via the formation of a condensin-like complex containing Smc and ScpB that pull DNA away from mid-cell into both cell halves. This chain is Segregation and condensation protein A, found in Streptococcus sanguinis (strain SK36).